Consider the following 186-residue polypeptide: Biphenyl dioxygenase subunit beta (186 aa).

Belongs to the bacterial ring-hydroxylating dioxygenase beta subunit family. Heterohexamer consisting of 3 BphA subunits and 3 BphE subunits. A ferredoxin (BphF) and a ferredoxin reductase (BphG) must be present to obtain activity.

It catalyses the reaction biphenyl + NADH + O2 + H(+) = (2R,3S)-3-phenylcyclohexa-3,5-diene-1,2-diol + NAD(+). It functions in the pathway xenobiotic degradation; biphenyl degradation; 2-hydroxy-2,4-pentadienoate and benzoate from biphenyl: step 1/4. Its function is as follows. The beta subunit may be responsible for the substrate specificity of the enzyme. This is Biphenyl dioxygenase subunit beta (bphE) from Comamonas testosteroni (Pseudomonas testosteroni).